A 310-amino-acid polypeptide reads, in one-letter code: Methionyl-tRNA formyltransferase (310 aa).

110 to 113 (SLLP) is a binding site for (6S)-5,6,7,8-tetrahydrofolate.

It belongs to the Fmt family.

It carries out the reaction L-methionyl-tRNA(fMet) + (6R)-10-formyltetrahydrofolate = N-formyl-L-methionyl-tRNA(fMet) + (6S)-5,6,7,8-tetrahydrofolate + H(+). Attaches a formyl group to the free amino group of methionyl-tRNA(fMet). The formyl group appears to play a dual role in the initiator identity of N-formylmethionyl-tRNA by promoting its recognition by IF2 and preventing the misappropriation of this tRNA by the elongation apparatus. The sequence is that of Methionyl-tRNA formyltransferase from Clostridium tetani (strain Massachusetts / E88).